Reading from the N-terminus, the 339-residue chain is MKSILIEKPNQLAIVEREIPTPSAGEVRVKVKLAGICGSDSHIYRGHNPFAKYPRVIGHEFFGVIDAVGEGVESARVGERVAVDPVVSCGHCYPCSIGKPNVCTTLAVLGVHADGGFSEYAVVPAKNAWKIPEAVADQYAVMIEPFTIAANVTGHGQPTENDTVLVYGAGPIGLTIVQVLKGVYNVKNVIVADRIDERLEKAKESGADWAINNSQTPLGEIFTEKGIKPTLIIDAACHPSILKEAVTLASPAARIVLMGFSSEPSEVIQQGITGKELSIFSSRLNANKFPIVIDWLSKGLIKPEKLITHTFDFQHVADAISLFEQDQKHCCKVLLTFSE.

The Zn(2+) site is built by Cys37, His59, Cys89, Cys92, Cys95, Cys103, and Glu144.

It belongs to the zinc-containing alcohol dehydrogenase family. It depends on Zn(2+) as a cofactor.

Not known; probable catabolic enzyme. In Escherichia coli (strain K12), this protein is Starvation-sensing protein RspB.